The following is a 163-amino-acid chain: 2-C-methyl-D-erythritol 2,4-cyclodiphosphate synthase (163 aa).

A divalent metal cation is bound by residues D12 and H14. Residues 12-14 and 38-39 contribute to the 4-CDP-2-C-methyl-D-erythritol 2-phosphate site; these read DVH and HS. H46 is a binding site for a divalent metal cation. 4-CDP-2-C-methyl-D-erythritol 2-phosphate contacts are provided by residues 60–62, 136–139, F143, and R146; these read DIG and TTSE.

This sequence belongs to the IspF family. In terms of assembly, homotrimer. A divalent metal cation is required as a cofactor.

It carries out the reaction 4-CDP-2-C-methyl-D-erythritol 2-phosphate = 2-C-methyl-D-erythritol 2,4-cyclic diphosphate + CMP. The protein operates within isoprenoid biosynthesis; isopentenyl diphosphate biosynthesis via DXP pathway; isopentenyl diphosphate from 1-deoxy-D-xylulose 5-phosphate: step 4/6. Involved in the biosynthesis of isopentenyl diphosphate (IPP) and dimethylallyl diphosphate (DMAPP), two major building blocks of isoprenoid compounds. Catalyzes the conversion of 4-diphosphocytidyl-2-C-methyl-D-erythritol 2-phosphate (CDP-ME2P) to 2-C-methyl-D-erythritol 2,4-cyclodiphosphate (ME-CPP) with a corresponding release of cytidine 5-monophosphate (CMP). This Xanthomonas oryzae pv. oryzae (strain MAFF 311018) protein is 2-C-methyl-D-erythritol 2,4-cyclodiphosphate synthase.